The sequence spans 160 residues: Large ribosomal subunit protein uL15 (160 aa).

Over residues 1–13 (MKLNEIRDNEGAR) the composition is skewed to basic and acidic residues. The tract at residues 1–41 (MKLNEIRDNEGARKSRIRVGRGIGSGKGKTGGRGVKGQKSR) is disordered. The segment covering 21 to 35 (RGIGSGKGKTGGRGV) has biased composition (gly residues).

It belongs to the universal ribosomal protein uL15 family. In terms of assembly, part of the 50S ribosomal subunit.

Functionally, binds to the 23S rRNA. The sequence is that of Large ribosomal subunit protein uL15 from Parvibaculum lavamentivorans (strain DS-1 / DSM 13023 / NCIMB 13966).